The sequence spans 308 residues: Probable GTP 3',8-cyclase (308 aa).

One can recognise a Radical SAM core domain in the interval 4-224; the sequence is RFGRPLEDLR…QIRKKHFRPR (221 aa). Arg13 serves as a coordination point for GTP. Positions 20, 24, and 27 each coordinate [4Fe-4S] cluster. Residue Lys60 coordinates GTP. Gly64 is an S-adenosyl-L-methionine binding site. Thr90 is a binding site for GTP. S-adenosyl-L-methionine is bound at residue Ser114. A GTP-binding site is contributed by Lys151. [4Fe-4S] cluster-binding residues include Cys245 and Cys248. 250-252 contributes to the GTP binding site; it reads RIR. Cys262 is a [4Fe-4S] cluster binding site.

This sequence belongs to the radical SAM superfamily. MoaA family. The cofactor is [4Fe-4S] cluster.

It carries out the reaction GTP + AH2 + S-adenosyl-L-methionine = (8S)-3',8-cyclo-7,8-dihydroguanosine 5'-triphosphate + 5'-deoxyadenosine + L-methionine + A + H(+). It participates in cofactor biosynthesis; molybdopterin biosynthesis. Functionally, catalyzes the cyclization of GTP to (8S)-3',8-cyclo-7,8-dihydroguanosine 5'-triphosphate. In Saccharolobus islandicus (strain L.S.2.15 / Lassen #1) (Sulfolobus islandicus), this protein is Probable GTP 3',8-cyclase.